Reading from the N-terminus, the 342-residue chain is Ribosomal RNA small subunit methyltransferase C (342 aa).

This sequence belongs to the methyltransferase superfamily. RsmC family. In terms of assembly, monomer.

The protein localises to the cytoplasm. The catalysed reaction is guanosine(1207) in 16S rRNA + S-adenosyl-L-methionine = N(2)-methylguanosine(1207) in 16S rRNA + S-adenosyl-L-homocysteine + H(+). Functionally, specifically methylates the guanine in position 1207 of 16S rRNA in the 30S particle. This Enterobacter sp. (strain 638) protein is Ribosomal RNA small subunit methyltransferase C.